The primary structure comprises 859 residues: Bifunctional levopimaradiene synthase, chloroplastic (859 aa).

The transit peptide at 1-52 (MALLSSSLSSHIPTGAHHLTLNAYANTQCIPHFFSTLNAGTSAGKRSSLYLR) directs the protein to the chloroplast. Aspartate 392, aspartate 394, aspartate 611, aspartate 615, asparagine 755, and glutamate 763 together coordinate Mg(2+). The short motif at 392–395 (DIDD) is the DXDD motif element. The DDXXD motif signature appears at 611–615 (DDLYD).

It belongs to the terpene synthase family. Tpsd subfamily. Mg(2+) serves as cofactor. It depends on Mn(2+) as a cofactor.

The protein resides in the plastid. The protein localises to the chloroplast. The catalysed reaction is (+)-copalyl diphosphate = abieta-8(14),12-diene + diphosphate. It catalyses the reaction (+)-copalyl diphosphate = abieta-7,13-diene + diphosphate. It functions in the pathway secondary metabolite biosynthesis; terpenoid biosynthesis. Its pathway is terpene metabolism; oleoresin biosynthesis. Functionally, terpene synthase (di-TPS) involved in the biosynthesis of diterpene natural products included in conifer oleoresin secretions and volatile emissions; these compounds contribute to biotic and abiotic stress defense against herbivores and pathogens. Catalyzes the conversion of (+)-copalyl diphosphate ((+)-CPP) to isopimaradiene. This chain is Bifunctional levopimaradiene synthase, chloroplastic, found in Picea sitchensis (Sitka spruce).